A 209-amino-acid polypeptide reads, in one-letter code: Outer-membrane lipoprotein carrier protein (209 aa).

The N-terminal stretch at 1 to 21 (MHRQLRYAVLATALFASTAFA) is a signal peptide.

The protein belongs to the LolA family. Monomer.

It is found in the periplasm. In terms of biological role, participates in the translocation of lipoproteins from the inner membrane to the outer membrane. Only forms a complex with a lipoprotein if the residue after the N-terminal Cys is not an aspartate (The Asp acts as a targeting signal to indicate that the lipoprotein should stay in the inner membrane). The sequence is that of Outer-membrane lipoprotein carrier protein from Xanthomonas oryzae pv. oryzae (strain MAFF 311018).